Here is a 588-residue protein sequence, read N- to C-terminus: Protein gamma response 1 (588 aa).

Coiled-coil stretches lie at residues 64–104 and 164–281; these read AACD…LGKT and SEVK…KTVV. Basic and acidic residues-rich tracts occupy residues 377–389, 465–484, and 508–525; these read KHSE…DKVR, NVKR…KKDD, and TSKK…KAER. 2 disordered regions span residues 377-398 and 417-525; these read KHSE…SGNN and PIVR…KAER.

As to expression, basal levels in mitotically dividing cells (meristems), and high levels in endoreduplicating cells (stipules, trichomes) (at protein level).

It localises to the nucleus. Seems to mediate cell cycle arrest before mitosis in response to DNA damage. Is probably also involved in the transition from mitosis to endoreduplication. This chain is Protein gamma response 1 (GR1), found in Arabidopsis thaliana (Mouse-ear cress).